Consider the following 306-residue polypeptide: Mitochondrial basic amino acids transporter (306 aa).

6 helical membrane-spanning segments follow: residues 2-22 (ALDFLAGCAGGVAGVIVGHPF), 61-81 (GLGSPLMGLTFINALVFGVQG), 96-116 (FLAGAAAGAIQCVICCPMELA), 153-172 (GMVSTLLRETPSFGVYFLTY), 187-207 (LLVPKLLLAGGTSGITSWLST), and 255-275 (LLRAFPVNAATFATVTVVLTY). Solcar repeat units lie at residues 2 to 86 (ALDF…TLRA), 90 to 178 (DSPL…MTRA), and 190 to 275 (PKLL…VLTY). The segment at 284 to 306 (DSEAALGTSPTPAGSALAQPSSL) is disordered. Residues 291-306 (TSPTPAGSALAQPSSL) show a composition bias toward polar residues.

This sequence belongs to the mitochondrial carrier (TC 2.A.29) family. In terms of tissue distribution, widely expressed, with highest levels in the brain, including cortex, cerebellum, hippocampus and hypothalamus, and moderate levels in liver, kidney, heart and testis.

The protein localises to the mitochondrion inner membrane. It carries out the reaction L-lysine(out) + L-arginine(in) = L-lysine(in) + L-arginine(out). The catalysed reaction is L-histidine(out) + L-arginine(in) = L-histidine(in) + L-arginine(out). It catalyses the reaction L-ornithine(in) + L-arginine(out) = L-ornithine(out) + L-arginine(in). The enzyme catalyses L-homoarginine(in) + L-arginine(out) = L-homoarginine(out) + L-arginine(in). It carries out the reaction N(omega)-methyl-L-arginine(in) + L-arginine(out) = N(omega)-methyl-L-arginine(out) + L-arginine(in). The catalysed reaction is L-arginine(in) = L-arginine(out). It catalyses the reaction L-lysine(in) = L-lysine(out). The enzyme catalyses L-ornithine(in) = L-ornithine(out). It carries out the reaction L-histidine(out) = L-histidine(in). In terms of biological role, mitochondrial transporter of arginine, lysine, homoarginine, methylarginine. Transports with a much lesser extent, ornithine and histidine. Does not transport carnitine nor acylcarnitines. Functions by both counter-exchange and uniport mechanisms. Plays a physiological role in the import of basic amino acids into mitochondria for mitochondrial protein synthesis and amino acid degradation. In Mus musculus (Mouse), this protein is Mitochondrial basic amino acids transporter (Slc25a29).